Consider the following 244-residue polypeptide: uncharacterized protein (244 aa).

The segment at 30 to 49 (RETNESPKSQNPSEEATTVN) is disordered. A compositionally biased stretch (polar residues) spans 35–49 (SPKSQNPSEEATTVN). 4 helical membrane-spanning segments follow: residues 96-116 (LWGT…LSNS), 128-148 (LLFI…FGLF), 171-191 (GFFI…TIAF), and 194-214 (FVTI…HPLS). A disordered region spans residues 224 to 244 (QLDGSGERKTDSSLVHQNPPN). Residues 235–244 (SSLVHQNPPN) are compositionally biased toward polar residues.

Its subcellular location is the nucleus membrane. This is an uncharacterized protein from Schizosaccharomyces pombe (strain 972 / ATCC 24843) (Fission yeast).